The sequence spans 394 residues: WAT1-related protein At2g40900 (394 aa).

Transmembrane regions (helical) follow at residues 13–33, 40–60, 67–87, 102–122, 142–162, 180–200, 209–229, 245–265, 273–293, and 298–318; these read FAMV…KTVL, YVLV…FALL, SKMT…GPVI, TFSS…ATLF, LVTV…INFF, AAVF…LQAA, LSMS…LAFV, LLAS…VQGL, VFVT…SFFV, and IYLG…AVLW. EamA domains are found at residues 22–147 and 189–317; these read YAGM…TVVG and LSWA…YAVL.

It belongs to the drug/metabolite transporter (DMT) superfamily. Plant drug/metabolite exporter (P-DME) (TC 2.A.7.4) family.

Its subcellular location is the membrane. This chain is WAT1-related protein At2g40900, found in Arabidopsis thaliana (Mouse-ear cress).